The sequence spans 260 residues: Phosphate import ATP-binding protein PstB (260 aa).

The region spanning I14 to I255 is the ABC transporter domain. Residue G46–S53 participates in ATP binding.

The protein belongs to the ABC transporter superfamily. Phosphate importer (TC 3.A.1.7) family. As to quaternary structure, the complex is composed of two ATP-binding proteins (PstB), two transmembrane proteins (PstC and PstA) and a solute-binding protein (PstS).

The protein resides in the cell inner membrane. It carries out the reaction phosphate(out) + ATP + H2O = ADP + 2 phosphate(in) + H(+). Functionally, part of the ABC transporter complex PstSACB involved in phosphate import. Responsible for energy coupling to the transport system. The chain is Phosphate import ATP-binding protein PstB from Borrelia garinii subsp. bavariensis (strain ATCC BAA-2496 / DSM 23469 / PBi) (Borreliella bavariensis).